A 389-amino-acid polypeptide reads, in one-letter code: GTPase Obg (389 aa).

The Obg domain maps to methionine 1–leucine 159. The region spanning alanine 160 to glutamate 333 is the OBG-type G domain. GTP is bound by residues glycine 166–serine 173, phenylalanine 191–isoleucine 195, aspartate 213–glycine 216, asparagine 283–aspartate 286, and serine 314–valine 316. The Mg(2+) site is built by serine 173 and threonine 193. The interval asparagine 359 to glutamate 389 is disordered. The span at isoleucine 364–aspartate 381 shows a compositional bias: acidic residues.

It belongs to the TRAFAC class OBG-HflX-like GTPase superfamily. OBG GTPase family. As to quaternary structure, monomer. Mg(2+) is required as a cofactor.

The protein localises to the cytoplasm. Its function is as follows. An essential GTPase which binds GTP, GDP and possibly (p)ppGpp with moderate affinity, with high nucleotide exchange rates and a fairly low GTP hydrolysis rate. Plays a role in control of the cell cycle, stress response, ribosome biogenesis and in those bacteria that undergo differentiation, in morphogenesis control. This chain is GTPase Obg, found in Vibrio vulnificus (strain CMCP6).